Here is a 253-residue protein sequence, read N- to C-terminus: CD151 antigen (253 aa).

Topologically, residues 1–18 (MGEFNEKKTTCGTVCLKY) are cytoplasmic. 2 S-palmitoyl cysteine lipidation sites follow: cysteine 11 and cysteine 15. The helical transmembrane segment at 19 to 39 (LLFTYNCCFWLAGLAVMAVGI) threads the bilayer. At 40–57 (WTLALKSDYISLLASGTY) the chain is on the extracellular side. A helical membrane pass occupies residues 58–78 (LATAYILVVAGAVVMVTGVLG). The Cytoplasmic segment spans residues 79–91 (CCATFKERRNLLR). The chain crosses the membrane as a helical span at residues 92–112 (LYFILLLIIFLLEIIAGVLAY). The Extracellular portion of the chain corresponds to 113–221 (VYYQQLNTEL…LETFIQEHLR (109 aa)). N-linked (GlcNAc...) asparagine glycosylation occurs at asparagine 159. Residues 222-242 (VIGAVGTGIACVQVFGMIFTC) form a helical membrane-spanning segment. 2 S-palmitoyl cysteine lipidation sites follow: cysteine 242 and cysteine 243. Residues 243-253 (CLYRSLKLEHY) are Cytoplasmic-facing.

Belongs to the tetraspanin (TM4SF) family. As to quaternary structure, interacts with integrins ITGA3:ITGB1, ITGA5:ITGB1, ITGA3:ITGB1 and ITGA6:ITGB4 and with CD9 and CD181. Interacts (via the second extracellular domain) with integrin ITGAV:ITGB3. Interacts with ITGA3; this interaction modulates ITGA3 glycosylation pattern. Interacts with F11R. Interacts with RAC1 and CDC42; these interactions mediate physical association of RAC1 and CDC42 with integrin adhesion receptor complexes. Post-translationally, palmitoylated. Palmitoylation by ZDHHC2 regulates CD151 expression, association with other tetraspanin family proteins and function in cell adhesion. Ubiquitinated by RNF128 on lysine residues present in the tetraspanin amino terminus via 'Lys-48'-linked ubiquitin leading to proteasomal degradation.

The protein localises to the cell membrane. Its function is as follows. Structural component of specialized membrane microdomains known as tetraspanin-enriched microdomains (TERMs), which act as platforms for receptor clustering and signaling. Plays a role in various cellular and molecular mechanism through its association with both integrin and non-integrin proteins. These interactions facilitate critical cellular functions, including cell-to-cell communication, wound healing, platelet aggregation, trafficking, cell motility, and angiogenesis. Via interaction with JAM-A/F11R and integrin ITGA3:ITGB1, promotes the recruitment of signaling molecules such as RAC1, CDC42 and RhoGTPases to facilitate the polarization of epithelial cells and the reorganization of the actin cytoskeleton, which are critical steps in cell migration process. Regulates the glycosylation pattern of ITGA3:ITGB1 thereby modulating its activity. Plays an essential role in the maintenance of central laminin-binding integrin ITGA6:ITGB4-containing adhesion complexes. Essential for the proper assembly of the glomerular and tubular basement membranes in kidney. Contributes to T-cell activation by modulating integrin signaling leading to activation of downstream targets PTK2 and MAPK1/MAPK3. The polypeptide is CD151 antigen (CD151) (Chlorocebus aethiops (Green monkey)).